Reading from the N-terminus, the 344-residue chain is MIVLGIESSCDETGVGVVDLDEQGNLTILADAVASSMQDHARFGGVVPEIASRAHLESMVPVMREALHRAGIDKPDAVAATVGPGLAGALLVGASAAKAYAAAWDVPFYAVNHLGGHVAVANLDGEPLPHSVALLVSGGHTQLLEVEAVGLPMKELGSTLDDAAGEAYDKVSRLLGLGYPGGPVIDKLARRGDPQAIAFPRGLMKKSDSRHDFSFSGLKTAVARYVEAAERAGEVISVEDVCASFQEAVCDVLTFKAVRACQDVGAKVLLLGGGVAANSRLRELAQERCDAAGIELRVPSFKLCTDNGVMIAALAAQRIHEGAGGSALTVGTDPSLAVETPQVF.

The Fe cation site is built by histidine 113 and histidine 117. Substrate contacts are provided by residues 135 to 139 (LVSGG), aspartate 169, glycine 182, aspartate 186, and asparagine 278. Aspartate 306 serves as a coordination point for Fe cation.

Belongs to the KAE1 / TsaD family. Requires Fe(2+) as cofactor.

It localises to the cytoplasm. It carries out the reaction L-threonylcarbamoyladenylate + adenosine(37) in tRNA = N(6)-L-threonylcarbamoyladenosine(37) in tRNA + AMP + H(+). Functionally, required for the formation of a threonylcarbamoyl group on adenosine at position 37 (t(6)A37) in tRNAs that read codons beginning with adenine. Is involved in the transfer of the threonylcarbamoyl moiety of threonylcarbamoyl-AMP (TC-AMP) to the N6 group of A37, together with TsaE and TsaB. TsaD likely plays a direct catalytic role in this reaction. The protein is tRNA N6-adenosine threonylcarbamoyltransferase of Corynebacterium efficiens (strain DSM 44549 / YS-314 / AJ 12310 / JCM 11189 / NBRC 100395).